A 1127-amino-acid polypeptide reads, in one-letter code: Ras guanine nucleotide exchange factor F (1127 aa).

Disordered stretches follow at residues 1–82 (MTDK…SLLN) and 96–154 (NSGG…SSSS). 2 stretches are compositionally biased toward low complexity: residues 23–53 (NQPS…TTSP) and 67–82 (NNNN…SLLN). The segment covering 122–132 (RTSTTLAQFSG) has biased composition (polar residues). Low complexity predominate over residues 133–154 (SSLPNTENSSPPPSSSLISSSS). Kelch repeat units follow at residues 212–261 (GFYL…LYNN), 262–311 (SMYI…VESG), 313–366 (MIVF…MHKG), 367–418 (NMYV…LFQD), and 420–469 (IFIS…VKGN). Residues 557–589 (SHQFVLQLIMEYLERNTYHKVIAAIQKESGVLH) enclose the LisH domain. In terms of domain architecture, N-terminal Ras-GEF spans 673–804 (NKVQIKAATF…KLRELKKKLQ (132 aa)). Positions 835–1062 (DELEIARQMT…YDLNLLSESL (228 aa)) constitute a Ras-GEF domain. The segment at 1090–1127 (LGSARELNNSNRDSNNITGSSSNNNSNSSNSLSPIVKL) is disordered. The span at 1103 to 1127 (SNNITGSSSNNNSNSSNSLSPIVKL) shows a compositional bias: low complexity.

Promotes the exchange of Ras-bound GDP by GTP. The polypeptide is Ras guanine nucleotide exchange factor F (gefF) (Dictyostelium discoideum (Social amoeba)).